A 344-amino-acid chain; its full sequence is Heat-inducible transcription repressor HrcA (344 aa).

This sequence belongs to the HrcA family.

Negative regulator of class I heat shock genes (grpE-dnaK-dnaJ and groELS operons). Prevents heat-shock induction of these operons. This Aster yellows witches'-broom phytoplasma (strain AYWB) protein is Heat-inducible transcription repressor HrcA.